The chain runs to 573 residues: 60 kDa heat shock protein, mitochondrial (573 aa).

Residues 1–26 constitute a mitochondrion transit peptide; sequence MLRLPTVFRQMRPVSRVLAPHLTRAY. K31 is subject to N6-succinyllysine. Phosphoserine is present on residues S67 and S70. ATP is bound at residue K75. Position 75 is an N6-acetyllysine (K75). K82 is modified (N6-acetyllysine; alternate). K82 bears the N6-succinyllysine; alternate mark. At K87 the chain carries N6-acetyllysine. Phosphotyrosine is present on Y90. K91 carries the post-translational modification N6-acetyllysine. 111-115 contributes to the ATP binding site; that stretch reads DGTTT. K125 carries the N6-acetyllysine; alternate modification. Position 125 is an N6-succinyllysine; alternate (K125). K130 bears the N6-acetyllysine mark. At K133 the chain carries N6-acetyllysine; alternate. At K133 the chain carries N6-succinyllysine; alternate. The residue at position 133 (K133) is an N6-malonyllysine; alternate. N6-acetyllysine is present on K156. 5 positions are modified to N6-acetyllysine; alternate: K191, K202, K205, K218, and K236. Residues K191, K202, K205, K218, and K236 each carry the N6-succinyllysine; alternate modification. K249 is modified (N6-acetyllysine). K250 is modified (N6-acetyllysine; alternate). Residue K250 is modified to N6-succinyllysine; alternate. Residues K269 and K292 each carry the N6-acetyllysine modification. K301 is modified (N6-succinyllysine). K314 bears the N6-acetyllysine mark. K352 is modified (N6-acetyllysine; alternate). K352 carries the post-translational modification N6-succinyllysine; alternate. At K389 the chain carries N6-acetyllysine. The residue at position 396 (K396) is an N6-acetyllysine; alternate. N6-succinyllysine; alternate is present on K396. S410 carries the phosphoserine modification. ATP is bound at residue G440. The residue at position 469 (K469) is an N6-acetyllysine. Residue K481 is modified to N6-acetyllysine; alternate. Residue K481 is modified to N6-succinyllysine; alternate. Phosphoserine is present on S488. ATP is bound at residue D520. A Glycyl lysine isopeptide (Lys-Gly) (interchain with G-Cter in SUMO2) cross-link involves residue K551.

Belongs to the chaperonin (HSP60) family. In terms of assembly, homoheptamer arranged in a ring structure. The functional units of these chaperonins consist of heptameric rings of the large subunit Hsp60, which function as a back-to-back double ring. Interacts with 2 heptameric Hsp10 rings to form the symmetrical football complex. Interacts with HRAS. Interacts with ATAD3A. Interacts with ETFBKMT and EEF1AKMT3. Interacts with MFHAS1.

The protein resides in the mitochondrion matrix. It carries out the reaction ATP + H2O + a folded polypeptide = ADP + phosphate + an unfolded polypeptide.. Functionally, chaperonin implicated in mitochondrial protein import and macromolecular assembly. Together with Hsp10, facilitates the correct folding of imported proteins. May also prevent misfolding and promote the refolding and proper assembly of unfolded polypeptides generated under stress conditions in the mitochondrial matrix. The functional units of these chaperonins consist of heptameric rings of the large subunit Hsp60, which function as a back-to-back double ring. In a cyclic reaction, Hsp60 ring complexes bind one unfolded substrate protein per ring, followed by the binding of ATP and association with 2 heptameric rings of the co-chaperonin Hsp10. This leads to sequestration of the substrate protein in the inner cavity of Hsp60 where, for a certain period of time, it can fold undisturbed by other cell components. Synchronous hydrolysis of ATP in all Hsp60 subunits results in the dissociation of the chaperonin rings and the release of ADP and the folded substrate protein. The chain is 60 kDa heat shock protein, mitochondrial (HSPD1) from Pongo abelii (Sumatran orangutan).